A 112-amino-acid polypeptide reads, in one-letter code: B3 domain-containing protein At1g43171 (112 aa).

A DNA-binding region (TF-B3) is located at residues 19–112; the sequence is DIVGNVALPK…FENKFIVLNF (94 aa).

Its subcellular location is the nucleus. The sequence is that of B3 domain-containing protein At1g43171 from Arabidopsis thaliana (Mouse-ear cress).